The primary structure comprises 191 residues: Lipid A acyltransferase PagP (191 aa).

Residues 1-26 (MLKVNKYVILIIAFVSQMMFSTTAQA) form the signal peptide. Residues H63, D106, and S107 contribute to the active site.

This sequence belongs to the lipid A palmitoyltransferase family. As to quaternary structure, homodimer.

It localises to the cell outer membrane. The catalysed reaction is a lipid A + a 1,2-diacyl-sn-glycero-3-phosphocholine = a hepta-acyl lipid A + a 2-acyl-sn-glycero-3-phosphocholine. It catalyses the reaction a lipid IVA + a 1,2-diacyl-sn-glycero-3-phosphocholine = a lipid IVB + a 2-acyl-sn-glycero-3-phosphocholine. It carries out the reaction a lipid IIA + a 1,2-diacyl-sn-glycero-3-phosphocholine = a lipid IIB + a 2-acyl-sn-glycero-3-phosphocholine. Its function is as follows. Transfers a fatty acid residue from the sn-1 position of a phospholipid to the N-linked hydroxyfatty acid chain on the proximal unit of lipid A or its precursors. The protein is Lipid A acyltransferase PagP of Enterobacter lignolyticus (strain SCF1).